The following is a 326-amino-acid chain: Putative ribose-phosphate pyrophosphokinase 2 (326 aa).

Residues 43 to 45 and 102 to 103 contribute to the ATP site; these read DGE and RQ. Mg(2+) is bound at residue H136. Residues D226 and 230–234 contribute to the D-ribose 5-phosphate site; that span reads NTGKT.

Belongs to the ribose-phosphate pyrophosphokinase family. Class I subfamily. As to quaternary structure, homohexamer. Mg(2+) serves as cofactor.

It is found in the cytoplasm. The catalysed reaction is D-ribose 5-phosphate + ATP = 5-phospho-alpha-D-ribose 1-diphosphate + AMP + H(+). It participates in metabolic intermediate biosynthesis; 5-phospho-alpha-D-ribose 1-diphosphate biosynthesis; 5-phospho-alpha-D-ribose 1-diphosphate from D-ribose 5-phosphate (route I): step 1/1. Its function is as follows. Involved in the biosynthesis of the central metabolite phospho-alpha-D-ribosyl-1-pyrophosphate (PRPP) via the transfer of pyrophosphoryl group from ATP to 1-hydroxyl of ribose-5-phosphate (Rib-5-P). This Streptococcus mutans serotype c (strain ATCC 700610 / UA159) protein is Putative ribose-phosphate pyrophosphokinase 2.